The sequence spans 335 residues: tRNA N6-adenosine threonylcarbamoyltransferase (335 aa).

Fe cation-binding residues include H112 and H116. Substrate contacts are provided by residues 134–138 (VVSGG), D167, G180, and N273. D301 serves as a coordination point for Fe cation.

It belongs to the KAE1 / TsaD family. Fe(2+) is required as a cofactor.

It localises to the cytoplasm. It catalyses the reaction L-threonylcarbamoyladenylate + adenosine(37) in tRNA = N(6)-L-threonylcarbamoyladenosine(37) in tRNA + AMP + H(+). Its function is as follows. Required for the formation of a threonylcarbamoyl group on adenosine at position 37 (t(6)A37) in tRNAs that read codons beginning with adenine. Is involved in the transfer of the threonylcarbamoyl moiety of threonylcarbamoyl-AMP (TC-AMP) to the N6 group of A37, together with TsaE and TsaB. TsaD likely plays a direct catalytic role in this reaction. The protein is tRNA N6-adenosine threonylcarbamoyltransferase of Shouchella clausii (strain KSM-K16) (Alkalihalobacillus clausii).